An 859-amino-acid polypeptide reads, in one-letter code: MASSEVSMKGNRGGDNFSSSGFSDPKETRNVSVAGEGQKSNSTRSAAAERALDPEAALYRELWHACAGPLVTVPRQDDRVFYFPQGHIEQVEASTNQAAEQQMPLYDLPSKLLCRVINVDLKAEADTDEVYAQITLLPEANQDENAIEKEAPLPPPPRFQVHSFCKTLTASDTSTHGGFSVLRRHADECLPPLDMSRQPPTQELVAKDLHANEWRFRHIFRGQPRRHLLQSGWSVFVSSKRLVAGDAFIFLRGENGELRVGVRRAMRQQGNVPSSVISSHSMHLGVLATAWHAISTGTMFTVYYKPRTSPSEFIVPFDQYMESVKNNYSIGMRFKMRFEGEEAPEQRFTGTIVGIEESDPTRWPKSKWRSLKVRWDETSSIPRPDRVSPWKVEPALAPPALSPVPMPRPKRPRSNIAPSSPDSSMLTREGTTKANMDPLPASGLSRVLQGQEYSTLRTKHTESVECDAPENSVVWQSSADDDKVDVVSGSRRYGSENWMSSARHEPTYTDLLSGFGTNIDPSHGQRIPFYDHSSSPSMPAKRILSDSEGKFDYLANQWQMIHSGLSLKLHESPKVPAATDASLQGRCNVKYSEYPVLNGLSTENAGGNWPIRPRALNYYEEVVNAQAQAQAREQVTKQPFTIQEETAKSREGNCRLFGIPLTNNMNGTDSTMSQRNNLNDAAGLTQIASPKVQDLSDQSKGSKSTNDHREQGRPFQTNNPHPKDAQTKTNSSRSCTKVHKQGIALGRSVDLSKFQNYEELVAELDRLFEFNGELMAPKKDWLIVYTDEENDMMLVGDDPWQEFCCMVRKIFIYTKEEVRKMNPGTLSCRSEEEAVVGEGSDAKDAKSASNPSLSSAGNS.

The segment at M1–A48 is disordered. A compositionally biased stretch (low complexity) spans G14–S23. The segment at residues F164 to M266 is a DNA-binding region (TF-B3). Pro residues predominate over residues L396–P407. Disordered stretches follow at residues L396–S442, I687–T736, and R829–S859. 2 stretches are compositionally biased toward polar residues: residues I416–L426 and L695–S704. In terms of domain architecture, PB1 spans R733–E817. The span at S847–S859 shows a compositional bias: polar residues.

This sequence belongs to the ARF family. In terms of assembly, homodimers and heterodimers. Interacts with ARF1. In terms of tissue distribution, expressed in the whole plant.

It is found in the nucleus. Auxin response factors (ARFs) are transcriptional factors that bind specifically to the DNA sequence 5'-TGTCTC-3' found in the auxin-responsive promoter elements (AuxREs). Could act as transcriptional activator or repressor. Formation of heterodimers with Aux/IAA proteins may alter their ability to modulate early auxin response genes expression. Promotes flowering, stamen development, floral organ abscission and fruit dehiscence. Functions independently of ethylene and cytokinin response pathways. May act as a repressor of cell division and organ growth. The sequence is that of Auxin response factor 2 (ARF2) from Arabidopsis thaliana (Mouse-ear cress).